Reading from the N-terminus, the 439-residue chain is MRPGNAATAHDTGTQPRPGPTENWRSPAAVTRSKQARELGDRLRGRLEVAADVLRLLVPGLRHQHQQARALLTEVGQSGVAVLMQVPARAHSADRSVVVQQCAGLPVRQPGEAGVRADVTRADDLSRTGAAVSDEYRPTGAALEQPGQEPGGTGVPIEGLQHEVLTDLASAAGLRLRPLGLGRAAAAGEVQILDVHAQDLLRAPGGLVEHPPQCLLPQVHLTPRDQPVNGHAGAGRGLGVRHREPFRPGRNGGAVVATLPAPAEPGQHRRAPGVLGVHRGSTPEQFERLADLVVRDRGQRSGLAEPFGGLAHPDPVVADRVRVAERVQEHVRRGPDAERLAGRQLYDGGHRFPLATDNRAASRTARRASPQVTDQATADIGVLSAGRLQTSPPADAPSAAHLGRLILSAGFRSDVPQPPPSPACRTTRAGSGAVAAVPR.

3 disordered regions span residues 1-36, 126-157, and 411-439; these read MRPG…SKQA, SRTG…GVPI, and FRSD…AVPR.

This is an uncharacterized protein from Streptomyces fradiae (Streptomyces roseoflavus).